Consider the following 267-residue polypeptide: Apolipoprotein A-I (267 aa).

An N-terminal signal peptide occupies residues 1 to 18 (MKAAVLTLAVLFLTGSQA). 2 consecutive repeat copies span residues 68–89 (LKLL…EQLG) and 90–111 (PVTQ…QEMS). The interval 68 to 267 (LKLLDNWDSV…EEYTKKLNTQ (200 aa)) is 10 X approximate tandem repeats. Residue Met110 is modified to Methionine sulfoxide. The 3; half-length repeat unit spans residues 112–122 (KDLEEVKAKVQ). Tandem repeats lie at residues 123–144 (PYLD…QKVE), 145–166 (PLRA…EKLS), 167–188 (PLGE…THLA), 189–210 (PYSD…ENGG), and 211–232 (ARLA…EKAK). Position 136 is a methionine sulfoxide (Met136). Residues 233 to 243 (PALEDLRQGLL) form a 9; half-length repeat. Repeat 10 spans residues 244-267 (PVLESFKVSFLSALEEYTKKLNTQ).

Belongs to the apolipoprotein A1/A4/E family. As to quaternary structure, homodimer. Interacts with APOA1BP and CLU. Component of a sperm activating protein complex (SPAP), consisting of APOA1, an immunoglobulin heavy chain, an immunoglobulin light chain and albumin. Interacts with NDRG1. Interacts with SCGB3A2. Interacts with NAXE and YJEFN3. Post-translationally, glycosylated. In terms of processing, palmitoylated. Phosphorylation sites are present in the extracellular medium. Major protein of plasma HDL, also found in chylomicrons.

Its subcellular location is the secreted. In terms of biological role, participates in the reverse transport of cholesterol from tissues to the liver for excretion by promoting cholesterol efflux from tissues and by acting as a cofactor for the lecithin cholesterol acyltransferase (LCAT). As part of the SPAP complex, activates spermatozoa motility. The chain is Apolipoprotein A-I (APOA1) from Pan troglodytes (Chimpanzee).